A 224-amino-acid chain; its full sequence is Ribose-5-phosphate isomerase A (224 aa).

Substrate is bound by residues 26–29, 82–85, and 95–98; these read TGST, DGAD, and KGGG. The Proton acceptor role is filled by E104. K122 contributes to the substrate binding site.

It belongs to the ribose 5-phosphate isomerase family. As to quaternary structure, homodimer.

It carries out the reaction aldehydo-D-ribose 5-phosphate = D-ribulose 5-phosphate. Its pathway is carbohydrate degradation; pentose phosphate pathway; D-ribose 5-phosphate from D-ribulose 5-phosphate (non-oxidative stage): step 1/1. In terms of biological role, catalyzes the reversible conversion of ribose-5-phosphate to ribulose 5-phosphate. In Lactococcus lactis subsp. cremoris (strain MG1363), this protein is Ribose-5-phosphate isomerase A.